The sequence spans 333 residues: Gamma-D-glutamyl-L-lysine dipeptidyl-peptidase (333 aa).

The N-terminal stretch at 1–23 (MKKVGTAFLTTLFIFSSFTSAHA) is a signal peptide. Substrate contacts are provided by residues E83, Y118, 237–239 (DCS), and 256–257 (DS). Residues 208 to 332 (TPAADDLINT…EEYAGARRYL (125 aa)) form the NlpC/P60 domain. C238 serves as the catalytic Nucleophile. H291 serves as the catalytic Proton acceptor. H303 is a catalytic residue.

The protein belongs to the peptidase C40 family. Monomer in solution.

The enzyme catalyses The enzyme releases L-Ala-gamma-D-Glu dipeptides from cell wall peptides via cleavage of an L-Ala-gamma-D-Glu-|-L-Lys bond.. It participates in cell wall degradation; peptidoglycan degradation. In terms of biological role, specifically hydrolyzes gamma-D-glutamyl-L-lysine bonds in murein peptides, releasing L-Ala-D-Glu. This Bacillus cereus (strain ATCC 10987 / NRS 248) protein is Gamma-D-glutamyl-L-lysine dipeptidyl-peptidase.